A 495-amino-acid polypeptide reads, in one-letter code: Lysine--tRNA ligase (495 aa).

Mg(2+) is bound by residues Glu-406 and Glu-413.

The protein belongs to the class-II aminoacyl-tRNA synthetase family. Homodimer. The cofactor is Mg(2+).

The protein localises to the cytoplasm. It catalyses the reaction tRNA(Lys) + L-lysine + ATP = L-lysyl-tRNA(Lys) + AMP + diphosphate. This chain is Lysine--tRNA ligase, found in Leptospira interrogans serogroup Icterohaemorrhagiae serovar Lai (strain 56601).